The sequence spans 998 residues: Probable protein kinase DDB_G0277539 (998 aa).

Disordered stretches follow at residues 1-34 (MDFP…DFDQ), 65-207 (CEDQ…TNEF), 265-284 (INNN…FSSS), 316-367 (SNGS…NYSS), 380-420 (ERTN…PNSI), and 435-489 (RLQS…NNNN). Over residues 23 to 32 (YDDDDDDDDF) the composition is skewed to acidic residues. The span at 70–139 (QQQQQQSSSP…NNNNNNNNNN (70 aa)) shows a compositional bias: low complexity. Over residues 140–150 (SHHHHLRKGRR) the composition is skewed to basic residues. Over residues 166–177 (ASLSSTKTNMFP) the composition is skewed to polar residues. Composition is skewed to low complexity over residues 184–203 (SSPS…QSQQ) and 265–274 (INNNYNNNNN). Polar residues predominate over residues 316-328 (SNGSYNKGNTFPS). Basic and acidic residues predominate over residues 330-340 (EVKRVRPDQRA). 2 stretches are compositionally biased toward low complexity: residues 393–415 (NVNN…NNNN) and 450–489 (NNNN…NNNN). Positions 508 to 849 (FQELDLIGEG…AEQLLEHPLI (342 aa)) constitute a Protein kinase domain. ATP contacts are provided by residues 514-522 (IGEGSFGHV) and Lys-537. Asp-631 (proton acceptor) is an active-site residue. Mg(2+)-binding residues include Asn-636 and Glu-677.

Belongs to the protein kinase superfamily. Ser/Thr protein kinase family. WEE1 subfamily.

It carries out the reaction L-seryl-[protein] + ATP = O-phospho-L-seryl-[protein] + ADP + H(+). The catalysed reaction is L-threonyl-[protein] + ATP = O-phospho-L-threonyl-[protein] + ADP + H(+). The polypeptide is Probable protein kinase DDB_G0277539 (Dictyostelium discoideum (Social amoeba)).